The following is a 142-amino-acid chain: Mediator of RNA polymerase II transcription subunit 9 (142 aa).

Residues 1–58 (MASSGVAGGRQAEDTLQPPPELLPESKPPPPPQPLPVAALPPPAAPRPQSPAGAKEEN) are disordered. A2 bears the N-acetylalanine mark. Residues 17 to 49 (QPPPELLPESKPPPPPQPLPVAALPPPAAPRPQ) show a composition bias toward pro residues. Residues 78 to 134 (DLHQDLNALKTKFQELRKLIGTMPGIHVSPEQQQQQLHSLREQVRTKNELLQKYKSL) are a coiled coil. At S106 the chain carries Phosphoserine.

This sequence belongs to the Mediator complex subunit 9 family. As to quaternary structure, component of the Mediator complex, which is composed of MED1, MED4, MED6, MED7, MED8, MED9, MED10, MED11, MED12, MED13, MED13L, MED14, MED15, MED16, MED17, MED18, MED19, MED20, MED21, MED22, MED23, MED24, MED25, MED26, MED27, MED29, MED30, MED31, CCNC, CDK8 and CDC2L6/CDK11. The MED12, MED13, CCNC and CDK8 subunits form a distinct module termed the CDK8 module. Mediator containing the CDK8 module is less active than Mediator lacking this module in supporting transcriptional activation. Individual preparations of the Mediator complex lacking one or more distinct subunits have been variously termed ARC, CRSP, DRIP, PC2, SMCC and TRAP.

Its subcellular location is the nucleus. In terms of biological role, component of the Mediator complex, a coactivator involved in the regulated transcription of nearly all RNA polymerase II-dependent genes. Mediator functions as a bridge to convey information from gene-specific regulatory proteins to the basal RNA polymerase II transcription machinery. Mediator is recruited to promoters by direct interactions with regulatory proteins and serves as a scaffold for the assembly of a functional preinitiation complex with RNA polymerase II and the general transcription factors. This is Mediator of RNA polymerase II transcription subunit 9 (Med9) from Mus musculus (Mouse).